The chain runs to 293 residues: HTH-type transcriptional regulator HdfR (293 aa).

Residues 1 to 58 (MDTELLKTFLEVSRTRHFGRAAESLYLTQSAVSFRIRQLENQLGANLFTRHRNNIRLT) enclose the HTH lysR-type domain. The H-T-H motif DNA-binding region spans 18 to 37 (FGRAAESLYLTQSAVSFRIR).

The protein belongs to the LysR transcriptional regulatory family.

Functionally, negatively regulates the transcription of the flagellar master operon flhDC by binding to the upstream region of the operon. The protein is HTH-type transcriptional regulator HdfR of Yersinia enterocolitica serotype O:8 / biotype 1B (strain NCTC 13174 / 8081).